A 409-amino-acid polypeptide reads, in one-letter code: Na(+)/H(+) antiporter NhaA (409 aa).

11 helical membrane-spanning segments follow: residues 13 to 33, 58 to 78, 93 to 113, 120 to 140, 153 to 173, 176 to 196, 216 to 236, 256 to 276, 279 to 299, 326 to 346, and 363 to 383; these read SGGI…NTFL, LILW…GLEL, IALP…IFYL, FALG…LGIL, IFLM…IALF, SELS…LFAL, VAVL…AFFI, LHGW…AGIS, GVGL…GLFV, FIQL…SLFI, and LAIL…LKFS.

This sequence belongs to the NhaA Na(+)/H(+) (TC 2.A.33) antiporter family.

The protein resides in the cell inner membrane. It carries out the reaction Na(+)(in) + 2 H(+)(out) = Na(+)(out) + 2 H(+)(in). In terms of biological role, na(+)/H(+) antiporter that extrudes sodium in exchange for external protons. The protein is Na(+)/H(+) antiporter NhaA of Campylobacter concisus (strain 13826).